The following is a 365-amino-acid chain: 3-dehydroquinate synthase (365 aa).

NAD(+) contacts are provided by residues G106 to D110, T130 to T131, K142, K151, and F169 to T172. Zn(2+)-binding residues include E184, H247, and H264.

Belongs to the sugar phosphate cyclases superfamily. Dehydroquinate synthase family. Requires NAD(+) as cofactor. The cofactor is Co(2+). Zn(2+) serves as cofactor.

It is found in the cytoplasm. The enzyme catalyses 7-phospho-2-dehydro-3-deoxy-D-arabino-heptonate = 3-dehydroquinate + phosphate. The protein operates within metabolic intermediate biosynthesis; chorismate biosynthesis; chorismate from D-erythrose 4-phosphate and phosphoenolpyruvate: step 2/7. Catalyzes the conversion of 3-deoxy-D-arabino-heptulosonate 7-phosphate (DAHP) to dehydroquinate (DHQ). This Listeria monocytogenes serovar 1/2a (strain ATCC BAA-679 / EGD-e) protein is 3-dehydroquinate synthase.